The primary structure comprises 972 residues: Mast/stem cell growth factor receptor Kit (972 aa).

The N-terminal stretch at 1-25 is a signal peptide; the sequence is MRGARRAWDFLFVLQLLLRVQTGSS. Topologically, residues 26–520 are extracellular; that stretch reads QPSVSPEELS…QIHAHTLFTP (495 aa). 5 Ig-like C2-type domains span residues 27–112, 121–205, 212–308, 317–410, and 413–507; these read PSVS…VFVR, DPPL…LKVR, PVVA…LEVV, PMMN…VYVN, and PEIL…FNFA. Intrachain disulfides connect Cys-58/Cys-97, Cys-136/Cys-186, Cys-151/Cys-183, and Cys-233/Cys-290. 2 N-linked (GlcNAc...) asparagine glycosylation sites follow: Asn-94 and Asn-145. Residues Asn-283, Asn-293, Asn-300, Asn-320, Asn-352, Asn-367, Asn-400, Asn-463, and Asn-486 are each glycosylated (N-linked (GlcNAc...) asparagine). A disulfide bond links Cys-428 and Cys-491. A helical transmembrane segment spans residues 521–541; it reads LLIGFVIAAGMMCIIVMILTY. Residues 542–972 are Cytoplasmic-facing; the sequence is KYLQKPMYEV…TQPLLVHEDV (431 aa). Phosphotyrosine; by autocatalysis is present on residues Tyr-543, Tyr-549, Tyr-564, and Tyr-566. A Mg(2+)-binding site is contributed by Tyr-564. The important for interaction with phosphotyrosine-binding proteins stretch occupies residues 564-566; that stretch reads YVY. A Protein kinase domain is found at 585 to 933; the sequence is LSFGKTLGAG…ISESTNHIYS (349 aa). Residues 592–599, Lys-619, and 667–673 contribute to the ATP site; these read GAGAFGKV and EYCCYGD. Residues Tyr-699, Tyr-717, and Tyr-726 each carry the phosphotyrosine; by autocatalysis modification. Ser-737 and Ser-742 each carry phosphoserine; by PKC/PRKCA. Catalysis depends on Asp-788, which acts as the Proton acceptor. Arg-792 serves as a coordination point for ATP. Residues Asn-793 and Asp-806 each coordinate Mg(2+). Ser-817 bears the Phosphoserine mark. Residue Tyr-819 is modified to Phosphotyrosine; by autocatalysis. Ser-887 bears the Phosphoserine mark. A phosphotyrosine; by autocatalysis mark is found at Tyr-896 and Tyr-932. Phosphoserine is present on Ser-955.

This sequence belongs to the protein kinase superfamily. Tyr protein kinase family. CSF-1/PDGF receptor subfamily. In terms of assembly, monomer in the absence of bound KITLG/SCF. Homodimer in the presence of bound KITLG/SCF, forming a heterotetramer with two KITLG/SCF molecules. Interacts (via phosphorylated tyrosine residues) with the adapter proteins GRB2 and GRB7 (via SH2 domain), and SH2B2/APS. Interacts (via C-terminus) with MPDZ (via the tenth PDZ domain). Interacts (via phosphorylated tyrosine residues) with PIK3R1 and PIK3 catalytic subunit. Interacts (via phosphorylated tyrosine) with CRK (isoform Crk-II), FYN, SHC1 and MATK/CHK (via SH2 domain). Interacts with LYN and FES/FPS. Interacts (via phosphorylated tyrosine residues) with the protein phosphatases PTPN6/SHP-1 (via SH2 domain), PTPN11/SHP-2 (via SH2 domain) and PTPRU. Interacts with PLCG1. Interacts with DOK1 and TEC. Interacts with IL1RAP (independent of stimulation with KITLG/SCF). A mast cell-specific KITLG/SCF-induced interleukin-33 signaling complex contains IL1RL1, IL1RAP, KIT and MYD88. Post-translationally, ubiquitinated by SOCS6. KIT is rapidly ubiquitinated after autophosphorylation induced by KITLG/SCF binding, leading to internalization and degradation. Autophosphorylated on tyrosine residues. KITLG/SCF binding promotes autophosphorylation. Phosphorylated tyrosine residues are important for interaction with specific binding partners.

The protein localises to the cell membrane. It catalyses the reaction L-tyrosyl-[protein] + ATP = O-phospho-L-tyrosyl-[protein] + ADP + H(+). Present in an inactive conformation in the absence of bound ligand. KITLG/SCF binding leads to dimerization and activation by autophosphorylation on tyrosine residues. Activity is down-regulated by PRKCA-mediated phosphorylation on serine residues. Functionally, tyrosine-protein kinase that acts as a cell-surface receptor for the cytokine KITLG/SCF and plays an essential role in the regulation of cell survival and proliferation, hematopoiesis, stem cell maintenance, gametogenesis, mast cell development, migration and function, and in melanogenesis. In response to KITLG/SCF binding, KIT can activate several signaling pathways. Phosphorylates PIK3R1, PLCG1, SH2B2/APS and CBL. Activates the AKT1 signaling pathway by phosphorylation of PIK3R1, the regulatory subunit of phosphatidylinositol 3-kinase. Activated KIT also transmits signals via GRB2 and activation of RAS, RAF1 and the MAP kinases MAPK1/ERK2 and/or MAPK3/ERK1. Promotes activation of STAT family members STAT1, STAT3, STAT5A and STAT5B. Activation of PLCG1 leads to the production of the cellular signaling molecules diacylglycerol and inositol 1,4,5-trisphosphate. KIT signaling is modulated by protein phosphatases, and by rapid internalization and degradation of the receptor. Activated KIT promotes phosphorylation of the protein phosphatases PTPN6/SHP-1 and PTPRU, and of the transcription factors STAT1, STAT3, STAT5A and STAT5B. Promotes phosphorylation of PIK3R1, CBL, CRK (isoform Crk-II), LYN, MAPK1/ERK2 and/or MAPK3/ERK1, PLCG1, SRC and SHC1. This is Mast/stem cell growth factor receptor Kit (KIT) from Sus scrofa (Pig).